A 308-amino-acid polypeptide reads, in one-letter code: Probable manganese-dependent inorganic pyrophosphatase (308 aa).

H9, D13, D15, D75, H97, and D149 together coordinate Mn(2+).

The protein belongs to the PPase class C family. Mn(2+) serves as cofactor.

It is found in the cytoplasm. It catalyses the reaction diphosphate + H2O = 2 phosphate + H(+). The chain is Probable manganese-dependent inorganic pyrophosphatase from Staphylococcus carnosus (strain TM300).